The chain runs to 359 residues: Peptide chain release factor 1 (359 aa).

Gln-235 is subject to N5-methylglutamine. Positions Ala-287–Phe-312 are disordered.

The protein belongs to the prokaryotic/mitochondrial release factor family. Post-translationally, methylated by PrmC. Methylation increases the termination efficiency of RF1.

The protein localises to the cytoplasm. Its function is as follows. Peptide chain release factor 1 directs the termination of translation in response to the peptide chain termination codons UAG and UAA. This Chlamydia trachomatis serovar L2 (strain ATCC VR-902B / DSM 19102 / 434/Bu) protein is Peptide chain release factor 1.